The chain runs to 297 residues: MTAKIIDGKVLAERLRGQVADEVARLRADYRLQPGLAVVLVGEDPASQVYVRSKGEHSLAVGMHSVTHRLPADTRQDELLRLVAELNADPLIHGILVQLPLPKHLDEKAVIAAISPDKDVDGLHVVNAGRLASGLPALVPCTPLGCLIMLRETLGDLTGKRAVVVGRSLLVGKPVAQLLLQADCTVTIAHSRTVDLPAVCREADILVAAVGRPRMIRGDWIKPGATVIDVGINRVPFDDPEKAAQGKTKLVGDVHYKEALQVAGAVTPVPGGVGLMTVACLLQNTVTAAKRLAGIEG.

Residues 166-168, S191, and I232 contribute to the NADP(+) site; that span reads GRS.

The protein belongs to the tetrahydrofolate dehydrogenase/cyclohydrolase family. As to quaternary structure, homodimer.

It carries out the reaction (6R)-5,10-methylene-5,6,7,8-tetrahydrofolate + NADP(+) = (6R)-5,10-methenyltetrahydrofolate + NADPH. The enzyme catalyses (6R)-5,10-methenyltetrahydrofolate + H2O = (6R)-10-formyltetrahydrofolate + H(+). The protein operates within one-carbon metabolism; tetrahydrofolate interconversion. Its function is as follows. Catalyzes the oxidation of 5,10-methylenetetrahydrofolate to 5,10-methenyltetrahydrofolate and then the hydrolysis of 5,10-methenyltetrahydrofolate to 10-formyltetrahydrofolate. The protein is Bifunctional protein FolD of Phenylobacterium zucineum (strain HLK1).